A 397-amino-acid polypeptide reads, in one-letter code: Probable transport protein MmpL6 (397 aa).

The next 5 membrane-spanning stretches (helical) occupy residues 190–210, 214–234, 242–262, 293–313, and 328–348; these read YDLL…MMII, LVAA…SFGL, LLGI…LLAV, TGGV…SFVF, and LGLL…IAVL.

This sequence belongs to the resistance-nodulation-cell division (RND) (TC 2.A.6) family. MmpL subfamily.

Its subcellular location is the cell membrane. In Mycobacterium tuberculosis (strain CDC 1551 / Oshkosh), this protein is Probable transport protein MmpL6 (mmpL6).